The following is a 638-amino-acid chain: 1-deoxy-D-xylulose-5-phosphate synthase (638 aa).

Thiamine diphosphate-binding positions include histidine 79 and 120 to 122 (GHS). Aspartate 151 is a Mg(2+) binding site. Residues 152–153 (GA), asparagine 182, tyrosine 291, and glutamate 373 contribute to the thiamine diphosphate site. Mg(2+) is bound at residue asparagine 182.

This sequence belongs to the transketolase family. DXPS subfamily. In terms of assembly, homodimer. Mg(2+) is required as a cofactor. Thiamine diphosphate serves as cofactor.

The enzyme catalyses D-glyceraldehyde 3-phosphate + pyruvate + H(+) = 1-deoxy-D-xylulose 5-phosphate + CO2. It functions in the pathway metabolic intermediate biosynthesis; 1-deoxy-D-xylulose 5-phosphate biosynthesis; 1-deoxy-D-xylulose 5-phosphate from D-glyceraldehyde 3-phosphate and pyruvate: step 1/1. In terms of biological role, catalyzes the acyloin condensation reaction between C atoms 2 and 3 of pyruvate and glyceraldehyde 3-phosphate to yield 1-deoxy-D-xylulose-5-phosphate (DXP). The protein is 1-deoxy-D-xylulose-5-phosphate synthase of Xanthomonas oryzae pv. oryzae (strain MAFF 311018).